Reading from the N-terminus, the 299-residue chain is Release factor glutamine methyltransferase (299 aa).

S-adenosyl-L-methionine-binding positions include 134–138 (GTGSG), aspartate 157, tryptophan 186, and asparagine 203. 203–206 (NPPY) is a binding site for substrate.

The protein belongs to the protein N5-glutamine methyltransferase family. PrmC subfamily.

It carries out the reaction L-glutaminyl-[peptide chain release factor] + S-adenosyl-L-methionine = N(5)-methyl-L-glutaminyl-[peptide chain release factor] + S-adenosyl-L-homocysteine + H(+). Functionally, methylates the class 1 translation termination release factors RF1/PrfA and RF2/PrfB on the glutamine residue of the universally conserved GGQ motif. In Synechocystis sp. (strain ATCC 27184 / PCC 6803 / Kazusa), this protein is Release factor glutamine methyltransferase.